The chain runs to 182 residues: ATP-dependent protease subunit HslV (182 aa).

T7 is a catalytic residue. The Na(+) site is built by G162, C165, and T168.

The protein belongs to the peptidase T1B family. HslV subfamily. As to quaternary structure, a double ring-shaped homohexamer of HslV is capped on each side by a ring-shaped HslU homohexamer. The assembly of the HslU/HslV complex is dependent on binding of ATP.

The protein resides in the cytoplasm. It carries out the reaction ATP-dependent cleavage of peptide bonds with broad specificity.. Allosterically activated by HslU binding. Functionally, protease subunit of a proteasome-like degradation complex believed to be a general protein degrading machinery. The sequence is that of ATP-dependent protease subunit HslV from Legionella pneumophila subsp. pneumophila (strain Philadelphia 1 / ATCC 33152 / DSM 7513).